The chain runs to 409 residues: MNDLLDPIRGIPVDLELVRRELDVDLPTARYLVRTGLITTDGARVLRRGPTTGTCATAAAKAAAIRLLEGRTVRTVRVRLPVGTVIGVRISRVGGDPSEARVRKPGSDDHVDVTTGVTIAARVEETGSEGVEIRAGRGVGETPSGKPAISEAVREQIVDNLRYLVDSYGVGLRVTIEVPDGEEIARKTLAHRHGIEGGISILGTKGLVDPNSEEAIEGSIRSDLRYVERVPCLVTGYRTMDRARRLGIPSRDIVNCHGRYDLALEAVKTGVPADGEVKRFDAVLIFGMPGKLLKLAAGAYNTHAKVADARRESLVTRLVEIGRPDLAVEAARHEGLISEFLRSLDPDVRRELFERVCELVEERVSSDHDLECGCALYFRADDSEEVVEGEGWKRLVRGYDDDLIGRPKG.

The protein belongs to the CbiD family.

The catalysed reaction is Co-precorrin-5B + S-adenosyl-L-methionine = Co-precorrin-6A + S-adenosyl-L-homocysteine. Its pathway is cofactor biosynthesis; adenosylcobalamin biosynthesis; cob(II)yrinate a,c-diamide from sirohydrochlorin (anaerobic route): step 6/10. Its function is as follows. Catalyzes the methylation of C-1 in cobalt-precorrin-5B to form cobalt-precorrin-6A. The sequence is that of Cobalt-precorrin-5B C(1)-methyltransferase from Methanopyrus kandleri (strain AV19 / DSM 6324 / JCM 9639 / NBRC 100938).